The following is a 299-amino-acid chain: Taste receptor type 2 member 16 (299 aa).

Topologically, residues 1 to 5 (MVPTQ) are extracellular. Residues 6-26 (VTIFSIIMYVLESLVIIVQSC) traverse the membrane as a helical segment. Residues 27–44 (TTVAVLFREWMHFQRLSP) are Cytoplasmic-facing. Residues 45-65 (VEIILISLGISHFCLQWTSML) form a helical membrane-spanning segment. The Extracellular portion of the chain corresponds to 66–82 (YNFGTYSRPVLLFWKVS). The chain crosses the membrane as a helical span at residues 83 to 103 (VVWEFMNVLTFWLTSLLAVLY). The Cytoplasmic segment spans residues 104 to 125 (CVKVSSFSHPVFLWLRLKILKL). The chain crosses the membrane as a helical span at residues 126 to 146 (VLWLLLGALIASCLSIIPSVV). At 147–183 (KYHIQMELLTLDHLPKNSSLILRLQMFEWYFSNPFKM) the chain is on the extracellular side. Asn-163 carries N-linked (GlcNAc...) asparagine glycosylation. Residues 184–204 (IGFGVPFLVFLISIILLTVSL) traverse the membrane as a helical segment. Residues 205-233 (VQHWGQMKHYSSSSSSLRAQCTVLKSLAT) are Cytoplasmic-facing. The chain crosses the membrane as a helical span at residues 234–254 (FFIFFTSYFLTIVVSFIGTVF). Over 255–258 (DKKS) the chain is Extracellular. Residues 259–279 (WFWVCEAVIYGLVCIHFTSLM) traverse the membrane as a helical segment. Residues 280–299 (MSNPTLKKALRLQFWSPESS) are Cytoplasmic-facing.

This sequence belongs to the G-protein coupled receptor T2R family. Interacts with RTP3 and RTP4. In terms of tissue distribution, expressed in subsets of taste receptor cells of the tongue and palate epithelium and exclusively in gustducin-positive cells. Expressed in the antrum and fundus (part of the stomach), duodenum and in gastric endocrine cells.

The protein resides in the cell membrane. Functionally, gustducin-coupled receptor implicated in the perception of bitter compounds in the oral cavity and the gastrointestinal tract. Signals through PLCB2 and the calcium-regulated cation channel TRPM5. This is Taste receptor type 2 member 16 (Tas2r16) from Rattus norvegicus (Rat).